The sequence spans 678 residues: RNA helicase NPH-II (678 aa).

One can recognise a Helicase ATP-binding domain in the interval 175–351 (FESWIHHVPV…EFFTESVFVH (177 aa)). 188–195 (GDTGVGKT) provides a ligand contact to ATP. The DEXH box motif lies at 300 to 303 (DEVH). Residues 371–546 (SLNKFMYIEE…VFDLQLPEDL (176 aa)) enclose the Helicase C-terminal domain.

Belongs to the DEAD box helicase family. DEAH subfamily. Monomer.

The protein localises to the virion. The catalysed reaction is ATP + H2O = ADP + phosphate + H(+). NTP-dependent helicase that catalyzes unidirectional unwinding of 3'tailed duplex RNAs and plays an important role during transcription of early mRNAs, presumably by preventing R-loop formation behind the elongating RNA polymerase. Might also play a role in the export of newly synthesized mRNA chains out of the core into the cytoplasm. Required for replication and propagation of viral particles. This chain is RNA helicase NPH-II (OPG084), found in Oryctolagus cuniculus (Rabbit).